The following is a 334-amino-acid chain: Type IV inositol polyphosphate 5-phosphatase 11 (334 aa).

2 catalytic regions span residues 206-222 and 282-297; these read DLTVWLGDLNYRIQDVS and KIRVPAWTDRILFKIQ.

This sequence belongs to the inositol polyphosphate 5-phosphatase family. As to expression, expressed ubiquitously.

Its subcellular location is the cell membrane. It carries out the reaction a 1,2-diacyl-sn-glycero-3-phospho-(1D-myo-inositol-4,5-bisphosphate) + H2O = a 1,2-diacyl-sn-glycero-3-phospho-(1D-myo-inositol 4-phosphate) + phosphate. It catalyses the reaction a 1,2-diacyl-sn-glycero-3-phospho-(1D-myo-inositol-3,4,5-trisphosphate) + H2O = a 1,2-diacyl-sn-glycero-3-phospho-(1D-myo-inositol-3,4-bisphosphate) + phosphate. Has phosphatase activity toward PtdIns(4,5)P2, and in vitro toward PtdIns(3,5)P2 and PtdIns(3,4,5)P3. Cannot dephosphorylate PtdIns(5)P, Ins(1,4,5)P3 and Ins(1,3,4,5)P4. The polypeptide is Type IV inositol polyphosphate 5-phosphatase 11 (Arabidopsis thaliana (Mouse-ear cress)).